We begin with the raw amino-acid sequence, 367 residues long: Probable protein phosphatase 2C 57 (367 aa).

Positions 1 to 29 (MEEHRLGGGGGGGGGGGRPPIPGAAGRKL) are disordered. Residues 7–18 (GGGGGGGGGGGR) are compositionally biased toward gly residues. Residues 67–331 (RSGGWADIGS…DNLSVVVICF (265 aa)) enclose the PPM-type phosphatase domain. Residues aspartate 111, glycine 112, aspartate 279, and aspartate 322 each coordinate Mn(2+).

Belongs to the PP2C family. Requires Mg(2+) as cofactor. It depends on Mn(2+) as a cofactor.

The catalysed reaction is O-phospho-L-seryl-[protein] + H2O = L-seryl-[protein] + phosphate. It catalyses the reaction O-phospho-L-threonyl-[protein] + H2O = L-threonyl-[protein] + phosphate. In Oryza sativa subsp. japonica (Rice), this protein is Probable protein phosphatase 2C 57.